Consider the following 424-residue polypeptide: O-methyltransferase aunD (424 aa).

Asp275 contacts S-adenosyl-L-methionine. The active-site Proton acceptor is the His326.

The protein belongs to the class I-like SAM-binding methyltransferase superfamily. Cation-independent O-methyltransferase family.

The protein operates within secondary metabolite biosynthesis. Functionally, O-methyltransferase; part of the gene cluster that mediates the biosynthesis of aurasperone B, a dimeric gamma-naphthopyrone. The first step in the biosynthesis of aurasperone B is the production of gamma-naphthopyrone precursor YWA1 by the non-reducing polyketide synthase albA, via condensation of one acetyl-CoA starter unit with 6 malonyl-CoA units. YWA1 is then methylated by aunE at position C-6 to yield foncesin which is further methylated at position C-8 by aunD to produce fonsecin B. A key enzyme in the biosynthetic pathway is the cytochrome P450 monooxygenase aunB which catalyzes the oxidative dimerization of fonsecin B to aurasperone B. AunB also catalyzes the oxidative dimerization of rubrofusarin B into aurasperone A. In Aspergillus niger (strain ATCC 1015 / CBS 113.46 / FGSC A1144 / LSHB Ac4 / NCTC 3858a / NRRL 328 / USDA 3528.7), this protein is O-methyltransferase aunD.